Here is a 224-residue protein sequence, read N- to C-terminus: tRNA (guanine-N(7)-)-methyltransferase (224 aa).

Glu-52, Asp-77, and Asp-126 together coordinate S-adenosyl-L-methionine. Residue Asp-126 is part of the active site. Positions 130 and 162 each coordinate substrate.

Belongs to the class I-like SAM-binding methyltransferase superfamily. TrmB family.

It carries out the reaction guanosine(46) in tRNA + S-adenosyl-L-methionine = N(7)-methylguanosine(46) in tRNA + S-adenosyl-L-homocysteine. It participates in tRNA modification; N(7)-methylguanine-tRNA biosynthesis. In terms of biological role, catalyzes the formation of N(7)-methylguanine at position 46 (m7G46) in tRNA. The protein is tRNA (guanine-N(7)-)-methyltransferase of Christiangramia forsetii (strain DSM 17595 / CGMCC 1.15422 / KT0803) (Gramella forsetii).